Consider the following 393-residue polypeptide: GDP-4-keto-6-deoxy-D-mannose 3-dehydratase (393 aa).

30–33 contributes to the GDP-4-dehydro-alpha-D-rhamnose binding site; it reads NMFT. A helical membrane pass occupies residues 53–73; it reads YSVMVSSGSTANLLMIAALFF. Residues 60–61, tryptophan 92, glutamate 166, and serine 187 contribute to the pyridoxal 5'-phosphate site; that span reads GS. The Proton donor/acceptor role is filled by histidine 192. L-glutamate is bound at residue histidine 219. Position 223 (arginine 223) interacts with GDP-4-dehydro-alpha-D-rhamnose. Asparagine 252 serves as a coordination point for pyridoxal 5'-phosphate. Arginine 254 lines the L-glutamate pocket. Glutamate 333 is a binding site for GDP-4-dehydro-alpha-D-rhamnose.

This sequence belongs to the DegT/DnrJ/EryC1 family. As to quaternary structure, homodimer. Pyridoxal 5'-phosphate is required as a cofactor.

The protein resides in the cell membrane. The catalysed reaction is GDP-4-dehydro-alpha-D-rhamnose + L-glutamate = GDP-4-dehydro-3,6-dideoxy-alpha-D-mannose + 2-oxoglutarate + NH4(+). Its pathway is nucleotide-sugar metabolism; GDP-L-colitose biosynthesis. In terms of biological role, involved in the biosynthesis of L-colitose, a 3,6-dideoxyhexose present in the O-antigen region of lipopolysaccharides (LPS), where it serves as an antigenic determinant and is vital for bacterial defense and survival. Catalyzes the removal of the C3'-hydroxyl group from GDP-4-keto-6-deoxy-D-mannose via a combined transamination-deoxygenation reaction. The catalysis is initiated by a transamination step in which pyridoxal 5'-phosphate (PLP) is converted to pyridoxamine 5'-phosphate (PMP) in the presence of L-glutamate. This coenzyme then forms a Schiff base with GDP-4-keto-6-deoxy-D-mannose and the resulting adduct undergoes a PMP-mediated beta-dehydration reaction to give a sugar enamine intermediate, which after tautomerization and hydrolysis to release ammonia yields GDP-4-keto-3,6-dideoxy-D-mannose as a product. The protein is GDP-4-keto-6-deoxy-D-mannose 3-dehydratase of Yersinia pseudotuberculosis.